A 124-amino-acid chain; its full sequence is Phosphoribosyl-AMP cyclohydrolase (124 aa).

Aspartate 82 is a binding site for Mg(2+). Residue cysteine 83 participates in Zn(2+) binding. Aspartate 84 and aspartate 86 together coordinate Mg(2+). Residues cysteine 99 and cysteine 106 each coordinate Zn(2+).

Belongs to the PRA-CH family. In terms of assembly, homodimer. Requires Mg(2+) as cofactor. The cofactor is Zn(2+).

Its subcellular location is the cytoplasm. The enzyme catalyses 1-(5-phospho-beta-D-ribosyl)-5'-AMP + H2O = 1-(5-phospho-beta-D-ribosyl)-5-[(5-phospho-beta-D-ribosylamino)methylideneamino]imidazole-4-carboxamide. The protein operates within amino-acid biosynthesis; L-histidine biosynthesis; L-histidine from 5-phospho-alpha-D-ribose 1-diphosphate: step 3/9. Catalyzes the hydrolysis of the adenine ring of phosphoribosyl-AMP. The polypeptide is Phosphoribosyl-AMP cyclohydrolase (Rhizorhabdus wittichii (strain DSM 6014 / CCUG 31198 / JCM 15750 / NBRC 105917 / EY 4224 / RW1) (Sphingomonas wittichii)).